The sequence spans 251 residues: Prolactin-7B1 (251 aa).

A signal peptide spans 1 to 29 (MHLSLTQQCLWPLQILLVSNLLLWENVAA). Residue N73 is glycosylated (N-linked (GlcNAc...) asparagine). 2 cysteine pairs are disulfide-bonded: C100–C216 and C233–C241.

This sequence belongs to the somatotropin/prolactin family.

The protein resides in the secreted. This Rattus norvegicus (Rat) protein is Prolactin-7B1 (Prl7b1).